We begin with the raw amino-acid sequence, 361 residues long: S-adenosylmethionine:tRNA ribosyltransferase-isomerase (361 aa).

It belongs to the QueA family. As to quaternary structure, monomer.

The protein resides in the cytoplasm. It catalyses the reaction 7-aminomethyl-7-carbaguanosine(34) in tRNA + S-adenosyl-L-methionine = epoxyqueuosine(34) in tRNA + adenine + L-methionine + 2 H(+). It functions in the pathway tRNA modification; tRNA-queuosine biosynthesis. Transfers and isomerizes the ribose moiety from AdoMet to the 7-aminomethyl group of 7-deazaguanine (preQ1-tRNA) to give epoxyqueuosine (oQ-tRNA). The sequence is that of S-adenosylmethionine:tRNA ribosyltransferase-isomerase from Afipia carboxidovorans (strain ATCC 49405 / DSM 1227 / KCTC 32145 / OM5) (Oligotropha carboxidovorans).